The following is a 386-amino-acid chain: Formate-dependent phosphoribosylglycinamide formyltransferase (386 aa).

N(1)-(5-phospho-beta-D-ribosyl)glycinamide is bound by residues 15–16 (EL) and Glu75. ATP is bound by residues Arg107, Lys148, 153–158 (SSGKGQ), 188–191 (EQFI), and Glu196. The ATP-grasp domain occupies 112-301 (ALAAQQLNLQ…EFELHLRAIV (190 aa)). Residues Glu260 and Glu272 each contribute to the Mg(2+) site. Residues Asp279, Lys349, and 356–357 (RR) each bind N(1)-(5-phospho-beta-D-ribosyl)glycinamide.

It belongs to the PurK/PurT family. As to quaternary structure, homodimer.

The catalysed reaction is N(1)-(5-phospho-beta-D-ribosyl)glycinamide + formate + ATP = N(2)-formyl-N(1)-(5-phospho-beta-D-ribosyl)glycinamide + ADP + phosphate + H(+). It functions in the pathway purine metabolism; IMP biosynthesis via de novo pathway; N(2)-formyl-N(1)-(5-phospho-D-ribosyl)glycinamide from N(1)-(5-phospho-D-ribosyl)glycinamide (formate route): step 1/1. Functionally, involved in the de novo purine biosynthesis. Catalyzes the transfer of formate to 5-phospho-ribosyl-glycinamide (GAR), producing 5-phospho-ribosyl-N-formylglycinamide (FGAR). Formate is provided by PurU via hydrolysis of 10-formyl-tetrahydrofolate. The sequence is that of Formate-dependent phosphoribosylglycinamide formyltransferase from Francisella tularensis subsp. tularensis (strain WY96-3418).